The primary structure comprises 976 residues: Apical junction component 1 homolog (976 aa).

Positions Ala-21 to His-49 are disordered. The residue at position 52 (Ser-52) is a Phosphoserine. Disordered stretches follow at residues Gly-61–Tyr-136, Pro-220–Ser-242, and Tyr-264–Phe-294. Residues Arg-98–Leu-113 show a composition bias toward pro residues. Positions Arg-116–Pro-134 are enriched in basic and acidic residues. Phosphoserine is present on Ser-129. Arg-322 carries the omega-N-methylarginine modification. The tract at residues Leu-412–Arg-443 is disordered. Phosphoserine is present on residues Ser-468, Ser-509, and Ser-512. 2 disordered regions span residues Asp-539–Gln-574 and Leu-614–Asp-660. 2 stretches are compositionally biased toward low complexity: residues Ser-616–Ala-625 and Pro-633–Pro-655. Arg-749 carries the post-translational modification Asymmetric dimethylarginine; alternate. Arg-749 carries the post-translational modification Omega-N-methylarginine; alternate. A disordered region spans residues Gly-855–Gly-888.

Its subcellular location is the apical cell membrane. It is found in the cell projection. It localises to the cilium. The protein resides in the cell junction. The protein localises to the adherens junction. Its function is as follows. May be involved in the control of adherens junction integrity. This Homo sapiens (Human) protein is Apical junction component 1 homolog.